A 264-amino-acid polypeptide reads, in one-letter code: Thymidylate synthase (264 aa).

Arg21 is a binding site for dUMP. (6R)-5,10-methylene-5,6,7,8-tetrahydrofolate is bound at residue His51. DUMP is bound at residue 126–127; the sequence is RR. Cys146 serves as the catalytic Nucleophile. DUMP-binding positions include 166–169, Asn177, and 207–209; these read RSGD and HLY. Residue Asp169 coordinates (6R)-5,10-methylene-5,6,7,8-tetrahydrofolate. Position 263 (Ala263) interacts with (6R)-5,10-methylene-5,6,7,8-tetrahydrofolate.

This sequence belongs to the thymidylate synthase family. Bacterial-type ThyA subfamily. As to quaternary structure, homodimer.

It is found in the cytoplasm. The enzyme catalyses dUMP + (6R)-5,10-methylene-5,6,7,8-tetrahydrofolate = 7,8-dihydrofolate + dTMP. Its pathway is pyrimidine metabolism; dTTP biosynthesis. Functionally, catalyzes the reductive methylation of 2'-deoxyuridine-5'-monophosphate (dUMP) to 2'-deoxythymidine-5'-monophosphate (dTMP) while utilizing 5,10-methylenetetrahydrofolate (mTHF) as the methyl donor and reductant in the reaction, yielding dihydrofolate (DHF) as a by-product. This enzymatic reaction provides an intracellular de novo source of dTMP, an essential precursor for DNA biosynthesis. The sequence is that of Thymidylate synthase from Xanthomonas axonopodis pv. citri (strain 306).